The primary structure comprises 478 residues: Putative UDP-glucose flavonoid 3-O-glucosyltransferase 3 (478 aa).

It belongs to the UDP-glycosyltransferase family.

This chain is Putative UDP-glucose flavonoid 3-O-glucosyltransferase 3, found in Fragaria ananassa (Strawberry).